Consider the following 428-residue polypeptide: 3-phosphoshikimate 1-carboxyvinyltransferase (428 aa).

3-phosphoshikimate is bound by residues Lys-21, Ser-22, and Arg-26. Lys-21 serves as a coordination point for phosphoenolpyruvate. Phosphoenolpyruvate contacts are provided by Gly-91 and Arg-119. 4 residues coordinate 3-phosphoshikimate: Ser-164, Gln-166, Asp-313, and Lys-340. Gln-166 contributes to the phosphoenolpyruvate binding site. The active-site Proton acceptor is the Asp-313. 2 residues coordinate phosphoenolpyruvate: Arg-344 and Arg-386.

It belongs to the EPSP synthase family. Monomer.

It localises to the cytoplasm. It carries out the reaction 3-phosphoshikimate + phosphoenolpyruvate = 5-O-(1-carboxyvinyl)-3-phosphoshikimate + phosphate. Its pathway is metabolic intermediate biosynthesis; chorismate biosynthesis; chorismate from D-erythrose 4-phosphate and phosphoenolpyruvate: step 6/7. Functionally, catalyzes the transfer of the enolpyruvyl moiety of phosphoenolpyruvate (PEP) to the 5-hydroxyl of shikimate-3-phosphate (S3P) to produce enolpyruvyl shikimate-3-phosphate and inorganic phosphate. This is 3-phosphoshikimate 1-carboxyvinyltransferase from Campylobacter jejuni subsp. jejuni serotype O:6 (strain 81116 / NCTC 11828).